Here is a 179-residue protein sequence, read N- to C-terminus: uncharacterized protein (179 aa).

The interval serine 53 to glutamate 82 is disordered. Positions proline 54–aspartate 67 are enriched in basic and acidic residues.

This is an uncharacterized protein from Ictaluridae (bullhead catfishes).